The chain runs to 275 residues: Pyridoxal phosphate homeostasis protein (275 aa).

Residue serine 6 is modified to Phosphoserine. At lysine 47 the chain carries N6-(pyridoxal phosphate)lysine. Tyrosine 69 carries the phosphotyrosine modification. Lysine 125 is subject to N6-succinyllysine. Serine 226 and serine 244 each carry phosphoserine. Basic and acidic residues predominate over residues 251–263 (DYSKKPTPDKCAA). A disordered region spans residues 251-275 (DYSKKPTPDKCAADVKAPLEVAQEH).

This sequence belongs to the pyridoxal phosphate-binding protein YggS/PROSC family. In terms of tissue distribution, ubiquitous.

Its function is as follows. Pyridoxal 5'-phosphate (PLP)-binding protein, which may be involved in intracellular homeostatic regulation of pyridoxal 5'-phosphate (PLP), the active form of vitamin B6. This chain is Pyridoxal phosphate homeostasis protein, found in Homo sapiens (Human).